The chain runs to 351 residues: UDP-N-acetylglucosamine--N-acetylmuramyl-(pentapeptide) pyrophosphoryl-undecaprenol N-acetylglucosamine transferase (351 aa).

UDP-N-acetyl-alpha-D-glucosamine is bound by residues 11–13, asparagine 120, arginine 161, serine 187, and glutamine 281; that span reads TGG.

It belongs to the glycosyltransferase 28 family. MurG subfamily.

The protein resides in the cell inner membrane. It catalyses the reaction di-trans,octa-cis-undecaprenyl diphospho-N-acetyl-alpha-D-muramoyl-L-alanyl-D-glutamyl-meso-2,6-diaminopimeloyl-D-alanyl-D-alanine + UDP-N-acetyl-alpha-D-glucosamine = di-trans,octa-cis-undecaprenyl diphospho-[N-acetyl-alpha-D-glucosaminyl-(1-&gt;4)]-N-acetyl-alpha-D-muramoyl-L-alanyl-D-glutamyl-meso-2,6-diaminopimeloyl-D-alanyl-D-alanine + UDP + H(+). The protein operates within cell wall biogenesis; peptidoglycan biosynthesis. Cell wall formation. Catalyzes the transfer of a GlcNAc subunit on undecaprenyl-pyrophosphoryl-MurNAc-pentapeptide (lipid intermediate I) to form undecaprenyl-pyrophosphoryl-MurNAc-(pentapeptide)GlcNAc (lipid intermediate II). This Rippkaea orientalis (strain PCC 8801 / RF-1) (Cyanothece sp. (strain PCC 8801)) protein is UDP-N-acetylglucosamine--N-acetylmuramyl-(pentapeptide) pyrophosphoryl-undecaprenol N-acetylglucosamine transferase.